The primary structure comprises 954 residues: Glycine dehydrogenase (decarboxylating) (954 aa).

Residue K704 is modified to N6-(pyridoxal phosphate)lysine.

This sequence belongs to the GcvP family. As to quaternary structure, the glycine cleavage system is composed of four proteins: P, T, L and H. The cofactor is pyridoxal 5'-phosphate.

The enzyme catalyses N(6)-[(R)-lipoyl]-L-lysyl-[glycine-cleavage complex H protein] + glycine + H(+) = N(6)-[(R)-S(8)-aminomethyldihydrolipoyl]-L-lysyl-[glycine-cleavage complex H protein] + CO2. Its function is as follows. The glycine cleavage system catalyzes the degradation of glycine. The P protein binds the alpha-amino group of glycine through its pyridoxal phosphate cofactor; CO(2) is released and the remaining methylamine moiety is then transferred to the lipoamide cofactor of the H protein. The sequence is that of Glycine dehydrogenase (decarboxylating) from Allorhizobium ampelinum (strain ATCC BAA-846 / DSM 112012 / S4) (Agrobacterium vitis (strain S4)).